A 37-amino-acid chain; its full sequence is Large ribosomal subunit protein bL36 (37 aa).

Belongs to the bacterial ribosomal protein bL36 family.

The polypeptide is Large ribosomal subunit protein bL36 (Mycobacteroides abscessus (strain ATCC 19977 / DSM 44196 / CCUG 20993 / CIP 104536 / JCM 13569 / NCTC 13031 / TMC 1543 / L948) (Mycobacterium abscessus)).